Reading from the N-terminus, the 235-residue chain is uncharacterized protein (235 aa).

A helical transmembrane segment spans residues 27–47 (AMKLWSTWITLLILTFFCSEC). A CX domain is found at 124 to 185 (YFWGESKYVP…CCGYDCCSNS (62 aa)). The helical transmembrane segment at 187–207 (IFTSIFSLLVILLIVSVLSIF) threads the bilayer.

The protein resides in the membrane. This is an uncharacterized protein from Caenorhabditis elegans.